Reading from the N-terminus, the 359-residue chain is Tropomodulin-1 (359 aa).

The tract at residues 36–61 (ELDPDNALLPAGLRQKDQTTKAPTGP) is disordered. The segment at 39–138 (PDNALLPAGL…CDIAAILGMH (100 aa)) is tropomyosin-binding.

It belongs to the tropomodulin family. Binds to the N-terminus of tropomyosin and to actin. Interacts with FLII. In terms of tissue distribution, highly expressed in the erythrocyte, heart and skeletal muscle.

The protein localises to the cytoplasm. It is found in the cytoskeleton. Blocks the elongation and depolymerization of the actin filaments at the pointed end. The Tmod/TM complex contributes to the formation of the short actin protofilament, which in turn defines the geometry of the membrane skeleton. In Mus musculus (Mouse), this protein is Tropomodulin-1 (Tmod1).